The chain runs to 470 residues: Tigger transposable element-derived protein 3 (470 aa).

The 53-residue stretch at 3–55 (LNTKKKLHALSLAEKIQVLELLDESKMSQSEVARRFQVSQPQISRICKNKEKL) folds into the HTH psq-type domain. 2 consecutive DNA-binding regions (H-T-H motif) follow at residues 31–51 (QSEVARRFQVSQPQISRICKN) and 100–130 (PMLLHKAKELADIMGQDFVPSIGWLVRWKRR). Positions 67-137 (ERKRKRESKY…KRRNNVGFGT (71 aa)) constitute an HTH CENPB-type domain. The DDE-1 domain occupies 167–360 (FSPEDVFGCA…VPRQLILSSF (194 aa)). A compositionally biased stretch (basic and acidic residues) spans 402 to 421 (DPGPRVCKEETGTEDSGREE). Residues 402 to 426 (DPGPRVCKEETGTEDSGREEDGFEP) are disordered.

This sequence belongs to the tigger transposable element derived protein family.

It is found in the nucleus. This chain is Tigger transposable element-derived protein 3 (Tigd3), found in Mus musculus (Mouse).